A 142-amino-acid polypeptide reads, in one-letter code: Large ribosomal subunit protein uL11 (142 aa).

The protein belongs to the universal ribosomal protein uL11 family. Part of the ribosomal stalk of the 50S ribosomal subunit. Interacts with L10 and the large rRNA to form the base of the stalk. L10 forms an elongated spine to which L12 dimers bind in a sequential fashion forming a multimeric L10(L12)X complex. In terms of processing, one or more lysine residues are methylated.

Forms part of the ribosomal stalk which helps the ribosome interact with GTP-bound translation factors. This Colwellia psychrerythraea (strain 34H / ATCC BAA-681) (Vibrio psychroerythus) protein is Large ribosomal subunit protein uL11.